Here is a 213-residue protein sequence, read N- to C-terminus: Adenylate kinase (213 aa).

Residue 10-15 (GAGKGT) coordinates ATP. Residues 30-59 (STGDMFRAAMANQTEMGILAKSYIDKGDLV) form an NMP region. AMP is bound by residues threonine 31, arginine 36, 57-59 (DLV), 86-89 (GYPR), and glutamine 93. The tract at residues 127 to 160 (GRIIHKETGETFHKVFNPPVGDYKEEDFYQREDD) is LID. ATP-binding positions include arginine 128 and 137–138 (TF). Positions 157 and 168 each coordinate AMP. Glutamine 196 contributes to the ATP binding site.

This sequence belongs to the adenylate kinase family. In terms of assembly, monomer.

It is found in the cytoplasm. It carries out the reaction AMP + ATP = 2 ADP. Its pathway is purine metabolism; AMP biosynthesis via salvage pathway; AMP from ADP: step 1/1. Functionally, catalyzes the reversible transfer of the terminal phosphate group between ATP and AMP. Plays an important role in cellular energy homeostasis and in adenine nucleotide metabolism. The polypeptide is Adenylate kinase (Streptococcus suis (strain 98HAH33)).